A 62-amino-acid polypeptide reads, in one-letter code: Photosystem II reaction center protein Z (62 aa).

Helical transmembrane passes span 8-28 and 41-61; these read AVFA…VVFS and FSGT…NSLI.

This sequence belongs to the PsbZ family. PSII is composed of 1 copy each of membrane proteins PsbA, PsbB, PsbC, PsbD, PsbE, PsbF, PsbH, PsbI, PsbJ, PsbK, PsbL, PsbM, PsbT, PsbY, PsbZ, Psb30/Ycf12, at least 3 peripheral proteins of the oxygen-evolving complex and a large number of cofactors. It forms dimeric complexes.

It localises to the plastid. It is found in the chloroplast thylakoid membrane. Its function is as follows. May control the interaction of photosystem II (PSII) cores with the light-harvesting antenna, regulates electron flow through the 2 photosystem reaction centers. PSII is a light-driven water plastoquinone oxidoreductase, using light energy to abstract electrons from H(2)O, generating a proton gradient subsequently used for ATP formation. The polypeptide is Photosystem II reaction center protein Z (Populus alba (White poplar)).